The following is a 73-amino-acid chain: UPF0346 protein SAS1364 (73 aa).

The protein belongs to the UPF0346 family.

This Staphylococcus aureus (strain MSSA476) protein is UPF0346 protein SAS1364.